Here is a 947-residue protein sequence, read N- to C-terminus: Probable outer membrane protein pmp19 (947 aa).

An N-terminal signal peptide occupies residues 1–19 (MKQMRLWGFLFLSSFCQVS). The Autotransporter domain occupies 672 to 947 (IPLQHLCVFG…NAHAGLSLSF (276 aa)).

This sequence belongs to the PMP outer membrane protein family.

The protein resides in the secreted. Its subcellular location is the cell wall. It localises to the cell outer membrane. In Chlamydia pneumoniae (Chlamydophila pneumoniae), this protein is Probable outer membrane protein pmp19 (pmp19).